Here is a 461-residue protein sequence, read N- to C-terminus: Pyruvate kinase (461 aa).

Arg46 is a substrate binding site. Residues Asn48 and Asp80 each coordinate K(+). 48 to 51 (NLAH) serves as a coordination point for ATP. Positions 87 and 165 each coordinate ATP. Mg(2+) is bound at residue Glu232. Positions 255, 256, and 288 each coordinate substrate. Residue Asp256 coordinates Mg(2+).

It belongs to the pyruvate kinase family. As to quaternary structure, homotetramer. It depends on a divalent metal cation as a cofactor.

The enzyme catalyses pyruvate + ATP = phosphoenolpyruvate + ADP + H(+). It participates in carbohydrate degradation; glycolysis; pyruvate from D-glyceraldehyde 3-phosphate: step 5/5. Not activated by classical allosteric effectors. The chain is Pyruvate kinase (pyk) from Pyrobaculum aerophilum (strain ATCC 51768 / DSM 7523 / JCM 9630 / CIP 104966 / NBRC 100827 / IM2).